The primary structure comprises 161 residues: Large ribosomal subunit protein uL10 (161 aa).

Belongs to the universal ribosomal protein uL10 family. Part of the ribosomal stalk of the 50S ribosomal subunit. The N-terminus interacts with L11 and the large rRNA to form the base of the stalk. The C-terminus forms an elongated spine to which L12 dimers bind in a sequential fashion forming a multimeric L10(L12)X complex.

Functionally, forms part of the ribosomal stalk, playing a central role in the interaction of the ribosome with GTP-bound translation factors. The polypeptide is Large ribosomal subunit protein uL10 (Sulfurovum sp. (strain NBC37-1)).